We begin with the raw amino-acid sequence, 243 residues long: Orotidine 5'-phosphate decarboxylase (243 aa).

Residues aspartate 19, lysine 41, aspartate 69–threonine 78, threonine 124, arginine 185, glutamine 194, glycine 214, and arginine 215 each bind substrate. Lysine 71 (proton donor) is an active-site residue.

This sequence belongs to the OMP decarboxylase family. Type 1 subfamily. Homodimer.

The catalysed reaction is orotidine 5'-phosphate + H(+) = UMP + CO2. It functions in the pathway pyrimidine metabolism; UMP biosynthesis via de novo pathway; UMP from orotate: step 2/2. Its function is as follows. Catalyzes the decarboxylation of orotidine 5'-monophosphate (OMP) to uridine 5'-monophosphate (UMP). The sequence is that of Orotidine 5'-phosphate decarboxylase from Xanthomonas oryzae pv. oryzae (strain MAFF 311018).